The chain runs to 155 residues: Protein-export protein SecB (155 aa).

This sequence belongs to the SecB family. Homotetramer, a dimer of dimers. One homotetramer interacts with 1 SecA dimer.

The protein resides in the cytoplasm. Functionally, one of the proteins required for the normal export of preproteins out of the cell cytoplasm. It is a molecular chaperone that binds to a subset of precursor proteins, maintaining them in a translocation-competent state. It also specifically binds to its receptor SecA. The polypeptide is Protein-export protein SecB (Enterobacter sp. (strain 638)).